Reading from the N-terminus, the 501-residue chain is GMP synthase [glutamine-hydrolyzing] (501 aa).

The Glutamine amidotransferase type-1 domain maps to 1–185 (MVLVVDYGSQ…LFNVCKLEKN (185 aa)). Cysteine 75 acts as the Nucleophile in catalysis. Residues histidine 159 and glutamate 161 contribute to the active site. In terms of domain architecture, GMPS ATP-PPase spans 186–376 (WKIGDLVEEK…LGIPDRIINR (191 aa)). 213–219 (SGGVDSS) is an ATP binding site.

Homodimer.

It carries out the reaction XMP + L-glutamine + ATP + H2O = GMP + L-glutamate + AMP + diphosphate + 2 H(+). It functions in the pathway purine metabolism; GMP biosynthesis; GMP from XMP (L-Gln route): step 1/1. In terms of biological role, catalyzes the synthesis of GMP from XMP. In Thermotoga petrophila (strain ATCC BAA-488 / DSM 13995 / JCM 10881 / RKU-1), this protein is GMP synthase [glutamine-hydrolyzing].